Consider the following 353-residue polypeptide: Trans-enoyl reductase fsa3 (353 aa).

Residue Val45–Lys48 participates in NADP(+) binding. Ile131–Leu138 is a substrate binding site. Residues Ser166 to Thr169, Ser189 to Asn192, Tyr207, and Leu254 to Glu255 each bind NADP(+). A substrate-binding site is contributed by Gly275–Leu279. NADP(+) is bound at residue Ile344–Ser345.

It belongs to the zinc-containing alcohol dehydrogenase family. In terms of assembly, monomer.

It carries out the reaction L-serine + 7 malonyl-CoA + acetyl-CoA + 2 S-adenosyl-L-methionine + ATP + 8 NADPH + 11 H(+) = (5S)-3-[(2E,6R,8E,10E,12E)-2,6-dimethyltetradeca-2,8,10,12-tetraenoyl]-5-(hydroxymethyl)pyrrolidine-2,4-dione + AMP + 2 S-adenosyl-L-homocysteine + 7 CO2 + diphosphate + 8 NADP(+) + 8 CoA + 6 H2O. It functions in the pathway mycotoxin biosynthesis. Its function is as follows. Trans-enoyl reductase; part of the gene cluster that mediates the biosynthesis of HIV-1 integrase inhibitor equisetin and of fusarisetin A, both trans-fused decalin-containing tetramic acids showing also antimicrobial activity. The PKS module of fsa1 together with the enoylreductase fsa3 catalyze the formation of the polyketide unit which is then conjugated to L-serine by the condensation domain of the fsa1 NRPS module. Activity of the Dieckmann cyclase domain (RED) results in release of the Dieckmann product intermediate. Diels-Alderase fsa2 is involved in endo-selective Diels-Alder cycloaddition to form the decalin ring, leading to the production of N-desmethylequisetin also called trichosetin. Subsequent N-methylation is carried out by fsa4 to give equisetin. The enzymatic gene responsible for the conversion of equisetin to fusarisetin A has not been identified yet and is probably located outside of the fsa cluster. The polypeptide is Trans-enoyl reductase fsa3 (Fusarium sp. (strain FN080326)).